A 115-amino-acid polypeptide reads, in one-letter code: uncharacterized protein (115 aa).

3 helical membrane-spanning segments follow: residues 6–26, 43–63, and 84–104; these read ILII…PFMV, ALSC…IHIL, and IFKV…VLVQ.

The protein belongs to the AzlD/HI_1737/HP1330 family.

The protein resides in the cell membrane. This is an uncharacterized protein from Helicobacter pylori (strain ATCC 700392 / 26695) (Campylobacter pylori).